The primary structure comprises 211 residues: ATP phosphoribosyltransferase (211 aa).

It belongs to the ATP phosphoribosyltransferase family. Short subfamily. As to quaternary structure, heteromultimer composed of HisG and HisZ subunits.

The protein resides in the cytoplasm. The catalysed reaction is 1-(5-phospho-beta-D-ribosyl)-ATP + diphosphate = 5-phospho-alpha-D-ribose 1-diphosphate + ATP. The protein operates within amino-acid biosynthesis; L-histidine biosynthesis; L-histidine from 5-phospho-alpha-D-ribose 1-diphosphate: step 1/9. In terms of biological role, catalyzes the condensation of ATP and 5-phosphoribose 1-diphosphate to form N'-(5'-phosphoribosyl)-ATP (PR-ATP). Has a crucial role in the pathway because the rate of histidine biosynthesis seems to be controlled primarily by regulation of HisG enzymatic activity. This Pseudomonas fluorescens (strain SBW25) protein is ATP phosphoribosyltransferase.